Here is a 246-residue protein sequence, read N- to C-terminus: Putative carbonic anhydrase 3 (246 aa).

The region spanning 3–244 is the Alpha-carbonic anhydrase domain; it reads GHWSYCDDDE…LNDRKIVHIV (242 aa). H61 (proton acceptor) is an active-site residue. Zn(2+) contacts are provided by H91, H93, and H116. 187-188 provides a ligand contact to substrate; it reads TT.

Belongs to the alpha-carbonic anhydrase family. It depends on Zn(2+) as a cofactor.

The enzyme catalyses hydrogencarbonate + H(+) = CO2 + H2O. Reversible hydration of carbon dioxide. The chain is Putative carbonic anhydrase 3 (cah-3) from Caenorhabditis elegans.